We begin with the raw amino-acid sequence, 195 residues long: Small ribosomal subunit protein bS16 (195 aa).

A compositionally biased stretch (low complexity) spans 171-181; the sequence is PEAPVAAAEPA. A disordered region spans residues 171–195; it reads PEAPVAAAEPAPEVKAEEKEEGGEA.

The protein belongs to the bacterial ribosomal protein bS16 family.

This chain is Small ribosomal subunit protein bS16, found in Chlorobium luteolum (strain DSM 273 / BCRC 81028 / 2530) (Pelodictyon luteolum).